Consider the following 352-residue polypeptide: Protein TIFY 6B (352 aa).

The disordered stretch occupies residues 1–71 (MERDFLGLGS…KSGNYHLPHS (71 aa)). Residues 17 to 26 (VKEETSESSR) show a composition bias toward basic and acidic residues. Residues 34–54 (MNWSFSNKVSASSSQFLSFRP) show a composition bias toward polar residues. Residues 172–207 (PIGSPAQLTIFYAGSVCVYDDISPEKAKAIMLLAGN) enclose the Tify domain. A Jas motif is present at residues 302–326 (PLARKASLARFLEKRKERVTSVSPY). A Nuclear localization signal motif is present at residues 304–311 (ARKASLAR).

This sequence belongs to the TIFY/JAZ family. As to quaternary structure, homo- and heterodimer. Interacts with COI1, MYC2, MYC3, MYC4, TIFY10A/JAZ1, TIFY10B/JAZ2, TIFY6A/JAZ4, TIFY5A/JAZ8, TIFY7/JAZ9, TIFY9/JAZ10 and TIFY3A/JAZ11. Interacts (via TIFY domain) with AFPH2/NINJA. In terms of processing, ubiquitinated. Targeted for degradation by the SCF(COI1) E3 ubiquitin ligase-proteasome pathway during jasmonate signaling. In terms of tissue distribution, srtongly expressed in root tips.

The protein localises to the nucleus. In terms of biological role, repressor of jasmonate responses. Jasmonoyl-isoleucine (JA-Ile) specifically promotes COI1-TIFY6B/JAZ3 interaction. Acts as a negative regulator of MYC2 function. Feed-back regulated by MYC2. The polypeptide is Protein TIFY 6B (TIFY6B) (Arabidopsis thaliana (Mouse-ear cress)).